Here is a 124-residue protein sequence, read N- to C-terminus: U12-barytoxin-Tl1a (124 aa).

The N-terminal stretch at 1 to 20 (MKTMIAWLVLLTFAAALCFA) is a signal peptide. The propeptide occupies 21 to 78 (DEGLKQEHMNERKKSRFREDIPDEISEDLLLQEMEAMEAELLEKEMRMEENRNSREKR). 3 disulfides stabilise this stretch: cysteine 79/cysteine 99, cysteine 86/cysteine 104, and cysteine 98/cysteine 118.

Belongs to the neurotoxin 14 (magi-1) family. 04 (ICK-6) subfamily. In terms of tissue distribution, expressed by the venom gland.

Its subcellular location is the secreted. Functionally, ion channel inhibitor. This is U12-barytoxin-Tl1a from Trittame loki (Brush-footed trapdoor spider).